The chain runs to 658 residues: ATP-dependent RNA helicase DDX3Y (658 aa).

Positions methionine 1–glutamate 143 are disordered. Residue serine 2 is modified to N-acetylserine. Basic and acidic residues predominate over residues arginine 45 to alanine 69. Lysine 56 is modified (N6-acetyllysine). A phosphoserine mark is found at serine 86 and serine 90. Residues glycine 94–arginine 129 show a composition bias toward basic and acidic residues. Residue arginine 101 is modified to Omega-N-methylarginine. At tyrosine 104 the chain carries Phosphotyrosine. Arginine 110 is subject to Omega-N-methylarginine. Lysine 117 is subject to N6-acetyllysine. Serine 130 and serine 182 each carry phosphoserine. Residues glutamate 179–lysine 207 carry the Q motif motif. ATP is bound at residue tyrosine 199–glutamine 206. The Helicase ATP-binding domain occupies isoleucine 210–leucine 402. Lysine 214 is covalently cross-linked (Glycyl lysine isopeptide (Lys-Gly) (interchain with G-Cter in SUMO2)). Alanine 223 to threonine 230 contributes to the ATP binding site. Positions aspartate 346–aspartate 349 match the DEAD box motif. The Helicase C-terminal domain maps to asparagine 413 to alanine 574. A Phosphoserine modification is found at serine 455. An Omega-N-methylarginine modification is found at arginine 590. Phosphoserine is present on residues serine 592 and serine 603. The segment at alanine 597–asparagine 627 is disordered. Low complexity predominate over residues serine 603 to asparagine 627. An omega-N-methylarginine mark is found at arginine 615 and arginine 628.

It belongs to the DEAD box helicase family. DDX3/DED1 subfamily. Found in heart, brain, liver, skeletal muscle, kidney and testis. Low expression detected in lung. In testis, expressed in all types of spermatogenic cells including spermatogonia, spermatocytes, spermatids and somatic Sertoli cells within the seminiferous tubules. Also expressed in Leydig cells and other interstitial cells.

The protein localises to the cytoplasm. It localises to the nucleus. It catalyses the reaction ATP + H2O = ADP + phosphate + H(+). Probable ATP-dependent RNA helicase. During immune response, may enhance IFNB1 expression via IRF3/IRF7 pathway. This Mus musculus (Mouse) protein is ATP-dependent RNA helicase DDX3Y (Ddx3y).